A 556-amino-acid polypeptide reads, in one-letter code: Small ribosomal subunit protein uS3m (556 aa).

This sequence belongs to the universal ribosomal protein uS3 family. In terms of assembly, component of the mitochondrial ribosome small subunit.

The protein localises to the mitochondrion. The polypeptide is Small ribosomal subunit protein uS3m (RPS3) (Arabidopsis thaliana (Mouse-ear cress)).